Reading from the N-terminus, the 286-residue chain is ATP synthase gamma chain (286 aa).

This sequence belongs to the ATPase gamma chain family. In terms of assembly, F-type ATPases have 2 components, CF(1) - the catalytic core - and CF(0) - the membrane proton channel. CF(1) has five subunits: alpha(3), beta(3), gamma(1), delta(1), epsilon(1). CF(0) has three main subunits: a, b and c.

The protein resides in the cell inner membrane. Functionally, produces ATP from ADP in the presence of a proton gradient across the membrane. The gamma chain is believed to be important in regulating ATPase activity and the flow of protons through the CF(0) complex. The chain is ATP synthase gamma chain from Flavobacterium psychrophilum (strain ATCC 49511 / DSM 21280 / CIP 103535 / JIP02/86).